The following is a 181-amino-acid chain: RNA pyrophosphohydrolase (181 aa).

The 143-residue stretch at 6-148 folds into the Nudix hydrolase domain; that stretch reads GFRPNVGIIV…KRQVYRQALQ (143 aa). Residues 38–59 carry the Nudix box motif; that stretch reads GGVEANETPLEALYRELREEVG.

Belongs to the Nudix hydrolase family. RppH subfamily. A divalent metal cation is required as a cofactor.

Functionally, accelerates the degradation of transcripts by removing pyrophosphate from the 5'-end of triphosphorylated RNA, leading to a more labile monophosphorylated state that can stimulate subsequent ribonuclease cleavage. This Halorhodospira halophila (strain DSM 244 / SL1) (Ectothiorhodospira halophila (strain DSM 244 / SL1)) protein is RNA pyrophosphohydrolase.